Consider the following 592-residue polypeptide: Methylenetetrahydrofolate reductase (NADH) 1 (592 aa).

Glu-21 functions as the Proton donor/acceptor in the catalytic mechanism. Residues 21–26 (EFFPPK) and 52–53 (TW) each bind NAD(+). FAD contacts are provided by residues 52-53 (TW), His-81, 111-113 (RGD), Tyr-153, 157-160 (HPDV), Asp-175, and Lys-182. Asp-113 is a binding site for substrate. Substrate is bound by residues Gln-193 and Tyr-285.

The protein belongs to the methylenetetrahydrofolate reductase family. In terms of assembly, homodimer. FAD serves as cofactor.

It carries out the reaction (6S)-5-methyl-5,6,7,8-tetrahydrofolate + NAD(+) = (6R)-5,10-methylene-5,6,7,8-tetrahydrofolate + NADH + H(+). The protein operates within one-carbon metabolism; tetrahydrofolate interconversion. Its activity is regulated as follows. Plant MTHFRs strongly prefer NADH over NADPH. Not inhibited by methionine or S-adenosylmethionine. Functionally, the probable reversibility of the MTHFR reaction in plants suggests that they can metabolize the methyl group of 5,10-methylenetetrahydrofolate to serine, sugars and starch. In Arabidopsis thaliana (Mouse-ear cress), this protein is Methylenetetrahydrofolate reductase (NADH) 1 (MTHFR1).